Consider the following 388-residue polypeptide: Chorismate synthase (388 aa).

NADP(+) contacts are provided by Arg39 and Arg45. Residues 130 to 132, 251 to 252, Gly296, 311 to 315, and Arg337 each bind FMN; these read RSS, NA, and KPIPT.

This sequence belongs to the chorismate synthase family. As to quaternary structure, homotetramer. It depends on FMNH2 as a cofactor.

The enzyme catalyses 5-O-(1-carboxyvinyl)-3-phosphoshikimate = chorismate + phosphate. It functions in the pathway metabolic intermediate biosynthesis; chorismate biosynthesis; chorismate from D-erythrose 4-phosphate and phosphoenolpyruvate: step 7/7. Catalyzes the anti-1,4-elimination of the C-3 phosphate and the C-6 proR hydrogen from 5-enolpyruvylshikimate-3-phosphate (EPSP) to yield chorismate, which is the branch point compound that serves as the starting substrate for the three terminal pathways of aromatic amino acid biosynthesis. This reaction introduces a second double bond into the aromatic ring system. The polypeptide is Chorismate synthase (Geobacillus thermodenitrificans (strain NG80-2)).